A 137-amino-acid chain; its full sequence is Active regulator of SIRT1 (137 aa).

Arginine 7 carries the post-translational modification Citrulline. The segment covering 14-24 (GAPEAPGAAPG) has biased composition (low complexity). The segment at 14–58 (GAPEAPGAAPGHTKPSQAPMKRTRKAKATQAQKLRNSAKGKVPKS) is disordered. Residue serine 84 is modified to Phosphoserine. A disordered region spans residues 96–120 (RQNRGRKACDRPVTKTKKKKKAEGT).

Belongs to the AROS family. In terms of assembly, part of the small subunit (SSU) processome, composed of more than 70 proteins and the RNA chaperone small nucleolar RNA (snoRNA) U3. Interacts with RPS19; the interaction is direct and mediates the integration of RPS19 in state post-A1. Interacts with SIRT1. Citrullinated by PADI4.

Its subcellular location is the nucleus. It is found in the nucleolus. Part of the small subunit (SSU) processome, first precursor of the small eukaryotic ribosomal subunit. During the assembly of the SSU processome in the nucleolus, many ribosome biogenesis factors, an RNA chaperone and ribosomal proteins associate with the nascent pre-rRNA and work in concert to generate RNA folding, modifications, rearrangements and cleavage as well as targeted degradation of pre-ribosomal RNA by the RNA exosome. Acts as a chaperone that specifically mediates the integration of RPS19 in state post-A1. Direct regulator of SIRT1. Enhances SIRT1-mediated deacetylation of p53/TP53, thereby participating in inhibition of p53/TP53-mediated transcriptional activity. The sequence is that of Active regulator of SIRT1 (RPS19BP1) from Bos taurus (Bovine).